Reading from the N-terminus, the 783-residue chain is Protein SEY1 (783 aa).

Residues 1-677 lie on the Cytoplasmic side of the membrane; that stretch reads MTSQAIQLID…KRSIVTSSTH (677 aa). The 233-residue stretch at 33-265 folds into the GB1/RHD3-type G domain; the sequence is GFNYHVISVF…YLLKPNYHHK (233 aa). 43 to 50 contacts GTP; it reads GSQSSGKS. Residues 449–472 adopt a coiled-coil conformation; that stretch reads HEKKLQLRESELNALLSKIKKQLT. A helical transmembrane segment spans residues 678–698; the sequence is IPIWIYAVIVVLGWNEFMIVI. The Lumenal segment spans residues 699-701; that stretch reads RNP. The chain crosses the membrane as a helical span at residues 702–722; sequence LFVTLALLSIVSFYFIQKFGL. Over 723–783 the chain is Cytoplasmic; that stretch reads WGPVMNVVNT…SSSSGNEDSD (61 aa).

The protein belongs to the TRAFAC class dynamin-like GTPase superfamily. GB1/RHD3 GTPase family. RHD3 subfamily.

It is found in the endoplasmic reticulum membrane. Its function is as follows. Cooperates with the reticulon proteins and tubule-shaping DP1 family proteins to generate and maintain the structure of the tubular endoplasmic reticulum network. Has GTPase activity, which is required for its function in ER organization. The sequence is that of Protein SEY1 from Candida glabrata (strain ATCC 2001 / BCRC 20586 / JCM 3761 / NBRC 0622 / NRRL Y-65 / CBS 138) (Yeast).